The chain runs to 266 residues: MKVLVLFCLVSLAAAGPLKDALNKAQVDAFYAEGYIVDGSNAADGDAPYQVSLQRTSHFCGGSIIADNYILTAAHCIQGLSASSLTIRYNTLRHNSGGLTVKASRIIGHEKYDSNTIDNDIALIQTASKMSTGTTNAQAIKLPEQGSDPKASSEVLITGWGTLSSGASSLPTKLQKVTVPIVDRKTCNANYGAVGADITDNMFCAGILNVGGKDACQGDSGGPVAANGVLVGAVSWGYGCAQAKYPGVYTRVGNYISWIKGKGVPV.

A signal peptide spans 1–15; the sequence is MKVLVLFCLVSLAAA. Residues 16 to 35 constitute a propeptide that is removed on maturation; the sequence is GPLKDALNKAQVDAFYAEGY. The Peptidase S1 domain maps to 36–260; the sequence is IVDGSNAADG…RVGNYISWIK (225 aa). Cysteines 60 and 76 form a disulfide. Active-site charge relay system residues include histidine 75 and aspartate 120. 2 cysteine pairs are disulfide-bonded: cysteine 187/cysteine 204 and cysteine 216/cysteine 240. The active-site Charge relay system is serine 220.

It belongs to the peptidase S1 family.

It is found in the secreted. The enzyme catalyses Preferential cleavage: Arg-|-Xaa, Lys-|-Xaa.. The polypeptide is Trypsin Blo t 3 (Blomia tropicalis (Mite)).